We begin with the raw amino-acid sequence, 548 residues long: Chaperonin GroEL (548 aa).

ATP contacts are provided by residues 30–33, K51, 87–91, G415, 479–481, and D495; these read TLGP, DGTTT, and NAA. Residues 524–548 are disordered; the sequence is LPKEDKSSDSNSSPAGGMGGMGGMM. Residues 539 to 548 are compositionally biased toward gly residues; the sequence is GGMGGMGGMM.

Belongs to the chaperonin (HSP60) family. Forms a cylinder of 14 subunits composed of two heptameric rings stacked back-to-back. Interacts with the co-chaperonin GroES.

It localises to the cytoplasm. It catalyses the reaction ATP + H2O + a folded polypeptide = ADP + phosphate + an unfolded polypeptide.. Together with its co-chaperonin GroES, plays an essential role in assisting protein folding. The GroEL-GroES system forms a nano-cage that allows encapsulation of the non-native substrate proteins and provides a physical environment optimized to promote and accelerate protein folding. The protein is Chaperonin GroEL of Buchnera aphidicola subsp. Myzus persicae (Myzus persicae primary endosymbiont).